Consider the following 637-residue polypeptide: tRNA-dihydrouridine(47) synthase [NAD(P)(+)]-like (637 aa).

3 disordered regions span residues 1 to 21 (MAET…ACER), 41 to 63 (LDGD…EPGA), and 85 to 105 (ERQV…VKPA). A compositionally biased stretch (basic residues) spans 89–104 (PKRARGQNKSRPHVKP). C3H1-type zinc fingers lie at residues 107–137 (YDKD…HDVG) and 145–175 (ADLG…HLGP). T260 is subject to Phosphothreonine. Residues S263 and S264 each carry the phosphoserine modification. FMN contacts are provided by residues 298–300 (PLT) and Q352. The active-site Proton donor is the C383. K403 is covalently cross-linked (Glycyl lysine isopeptide (Lys-Gly) (interchain with G-Cter in SUMO2)). Residues K422, H452, 484 to 486 (NGD), and 507 to 508 (AR) contribute to the FMN site.

The protein belongs to the Dus family. Dus3 subfamily. The cofactor is FMN.

The enzyme catalyses 5,6-dihydrouridine(47) in tRNA + NAD(+) = uridine(47) in tRNA + NADH + H(+). The catalysed reaction is 5,6-dihydrouridine(47) in tRNA + NADP(+) = uridine(47) in tRNA + NADPH + H(+). It carries out the reaction a 5,6-dihydrouridine in mRNA + NAD(+) = a uridine in mRNA + NADH + H(+). It catalyses the reaction a 5,6-dihydrouridine in mRNA + NADP(+) = a uridine in mRNA + NADPH + H(+). In terms of biological role, catalyzes the synthesis of dihydrouridine, a modified base, in various RNAs, such as tRNAs, mRNAs and some long non-coding RNAs (lncRNAs). Mainly modifies the uridine in position 47 (U47) in the D-loop of most cytoplasmic tRNAs. Also able to mediate the formation of dihydrouridine in some mRNAs, thereby regulating their translation. The protein is tRNA-dihydrouridine(47) synthase [NAD(P)(+)]-like of Mus musculus (Mouse).